The primary structure comprises 102 residues: Small ribosomal subunit protein uS10c (102 aa).

Belongs to the universal ribosomal protein uS10 family. Part of the 30S ribosomal subunit.

The protein localises to the plastid. The protein resides in the chloroplast. Involved in the binding of tRNA to the ribosomes. This is Small ribosomal subunit protein uS10c from Guillardia theta (Cryptophyte).